A 772-amino-acid chain; its full sequence is Metal transporter CNNM4 (772 aa).

The Extracellular portion of the chain corresponds to 1-175 (MAPGGGGGRR…SLLFMVEEHG (175 aa)). N-linked (GlcNAc...) asparagine glycosylation is present at Asn120. A helical membrane pass occupies residues 176 to 196 (RFLPLWLHILLVLVLLVLSGI). One can recognise a CNNM transmembrane domain in the interval 176-356 (RFLPLWLHIL…EPYNDLVKEE (181 aa)). Residues 197–237 (FSGLNLGLMALDPMELRIVQNCGTEKERRYARKIEPIRRKG) are Cytoplasmic-facing. Residues 238-258 (NYLLCSLLLGNVLVNTSLTIL) constitute an intramembrane region (helical). The Cytoplasmic portion of the chain corresponds to 259 to 261 (LDN). Residues 262–282 (LIGSGIMAVASSTIGIVIFGE) form a helical membrane-spanning segment. At 283 to 290 (ILPQALCS) the chain is on the extracellular side. A helical transmembrane segment spans residues 291 to 313 (RHGLAVGANTIVLTKIFMLLTFP). Residues 314–772 (LSFPISKLLD…LHRASQEGTI (459 aa)) lie on the Cytoplasmic side of the membrane. 2 CBS domains span residues 375–436 (MTQL…CTPL) and 443–509 (YNHP…ILDE). Positions 647-676 (PDRSPAHPTPLSRSASLSYPDRNTDMTPSS) are disordered. Ser658, Ser662, and Ser767 each carry phosphoserine.

This sequence belongs to the ACDP family. In terms of assembly, interacts with COX11. In terms of tissue distribution, present in spinal cord dorsal horn neurons and in developing teeth (at protein level). In the tooth, higher expression is found in the ameloblasts during the transition and maturation phases of amelogenesis; reduced expression in the odontoblasts.

The protein localises to the cell membrane. In terms of biological role, probable metal transporter. The interaction with the metal ion chaperone COX11 suggests that it may play a role in sensory neuron functions. May play a role in biomineralization and retinal function. The chain is Metal transporter CNNM4 (Cnnm4) from Rattus norvegicus (Rat).